Consider the following 291-residue polypeptide: Porphobilinogen deaminase (291 aa).

C237 is modified (S-(dipyrrolylmethanemethyl)cysteine).

Belongs to the HMBS family. As to quaternary structure, monomer. Dipyrromethane is required as a cofactor.

It catalyses the reaction 4 porphobilinogen + H2O = hydroxymethylbilane + 4 NH4(+). It functions in the pathway porphyrin-containing compound metabolism; protoporphyrin-IX biosynthesis; coproporphyrinogen-III from 5-aminolevulinate: step 2/4. Functionally, tetrapolymerization of the monopyrrole PBG into the hydroxymethylbilane pre-uroporphyrinogen in several discrete steps. The polypeptide is Porphobilinogen deaminase (Clostridium perfringens (strain SM101 / Type A)).